Here is a 401-residue protein sequence, read N- to C-terminus: Restriction of telomere capping protein 4 (401 aa).

Ser-23 carries the post-translational modification Phosphoserine. Positions 35-48 are enriched in basic and acidic residues; that stretch reads KHDIHDRESDDLSG. The disordered stretch occupies residues 35-59; it reads KHDIHDRESDDLSGHDAFSPSKKRG.

Belongs to the RTC4 family.

It localises to the cytoplasm. It is found in the nucleus. In terms of biological role, may be involved in a process influencing telomere capping. The polypeptide is Restriction of telomere capping protein 4 (RTC4) (Saccharomyces cerevisiae (strain ATCC 204508 / S288c) (Baker's yeast)).